The primary structure comprises 122 residues: NADPH-dependent 7-cyano-7-deazaguanine reductase (122 aa).

C34 serves as the catalytic Thioimide intermediate. The active-site Proton donor is the D41. Substrate-binding positions include 56–58 (VEL) and 75–76 (HE).

It belongs to the GTP cyclohydrolase I family. QueF type 1 subfamily.

It is found in the cytoplasm. It catalyses the reaction 7-aminomethyl-7-carbaguanine + 2 NADP(+) = 7-cyano-7-deazaguanine + 2 NADPH + 3 H(+). It functions in the pathway tRNA modification; tRNA-queuosine biosynthesis. In terms of biological role, catalyzes the NADPH-dependent reduction of 7-cyano-7-deazaguanine (preQ0) to 7-aminomethyl-7-deazaguanine (preQ1). The polypeptide is NADPH-dependent 7-cyano-7-deazaguanine reductase (Anaeromyxobacter dehalogenans (strain 2CP-C)).